The following is a 408-amino-acid chain: DNA replication and repair protein RecF (408 aa).

30 to 37 contacts ATP; the sequence is GSNGQGKT. 2 disordered regions span residues 220 to 252 and 389 to 408; these read DHGPSARPELSILADDPGEDDVADETGARDGGR and SPTPASASEPASPGEDGGAA. Positions 389–402 are enriched in low complexity; sequence SPTPASASEPASPG.

Belongs to the RecF family.

It is found in the cytoplasm. In terms of biological role, the RecF protein is involved in DNA metabolism; it is required for DNA replication and normal SOS inducibility. RecF binds preferentially to single-stranded, linear DNA. It also seems to bind ATP. In Clavibacter sepedonicus (Clavibacter michiganensis subsp. sepedonicus), this protein is DNA replication and repair protein RecF.